Consider the following 1200-residue polypeptide: DNA polymerase subunit gamma-1 (1200 aa).

Disordered stretches follow at residues 471 to 515 (QKKT…RPSM) and 667 to 688 (MDLS…SSEH). Over residues 472 to 481 (KKTKISKKQK) the composition is skewed to basic residues. Over residues 494 to 512 (LVEDHNEDPGPPTEKEESR) the composition is skewed to basic and acidic residues.

This sequence belongs to the DNA polymerase type-A family. Heterotrimer composed of a catalytic subunit and a homodimer of accessory subunits. Mg(2+) serves as cofactor.

The protein resides in the mitochondrion. It localises to the mitochondrion matrix. The protein localises to the mitochondrion nucleoid. The enzyme catalyses DNA(n) + a 2'-deoxyribonucleoside 5'-triphosphate = DNA(n+1) + diphosphate. Functionally, involved in the replication of mitochondrial DNA. Associates with mitochondrial DNA. The protein is DNA polymerase subunit gamma-1 (polg) of Xenopus laevis (African clawed frog).